The sequence spans 449 residues: Phosphoglucosamine mutase (449 aa).

Ser-101 acts as the Phosphoserine intermediate in catalysis. 4 residues coordinate Mg(2+): Ser-101, Asp-240, Asp-242, and Asp-244. Ser-101 carries the phosphoserine modification.

The protein belongs to the phosphohexose mutase family. Mg(2+) is required as a cofactor. Post-translationally, activated by phosphorylation.

It catalyses the reaction alpha-D-glucosamine 1-phosphate = D-glucosamine 6-phosphate. In terms of biological role, catalyzes the conversion of glucosamine-6-phosphate to glucosamine-1-phosphate. In Streptococcus suis (strain 98HAH33), this protein is Phosphoglucosamine mutase.